The sequence spans 286 residues: 2-hydroxy-6-oxo-6-phenylhexa-2,4-dienoate hydrolase (286 aa).

One can recognise an AB hydrolase-1 domain in the interval 36–271 (VIMLHGGGPG…RCGHWAQWEH (236 aa)). Substrate contacts are provided by residues 42-43 (GG), Asn51, Asn111, Ser180, and Arg190. His265 (proton acceptor) is an active-site residue. Residue Trp266 participates in substrate binding.

This sequence belongs to the AB hydrolase superfamily. BphD family. In terms of assembly, homodimer.

It catalyses the reaction 2,6-dioxo-6-phenylhexa-3-enoate + H2O = 2-oxopent-4-enoate + benzoate + H(+). It participates in xenobiotic degradation; biphenyl degradation; 2-hydroxy-2,4-pentadienoate and benzoate from biphenyl: step 4/4. Its function is as follows. Catalyzes an unusual C-C bond hydrolysis of 2-hydroxy-6-oxo-6-phenylhexa-2,4-dienoic acid (HOPDA) to produce benzoic acid and 2-hydroxy-2,4-pentadienoic acid (HPD). The polypeptide is 2-hydroxy-6-oxo-6-phenylhexa-2,4-dienoate hydrolase (Burkholderia cepacia (Pseudomonas cepacia)).